A 526-amino-acid polypeptide reads, in one-letter code: Protein ERGIC-53-like (526 aa).

A signal peptide spans 1–25 (MPAVSGPGPLFCLLLLLLDPHSPET). The Lumenal portion of the chain corresponds to 26–462 (GCPPLRRFEY…QPPRASSCLQ (437 aa)). Positions 31–252 (RRFEYKLSFK…DVLSFLTFSL (222 aa)) constitute an L-type lectin-like domain. The N-linked (GlcNAc...) asparagine glycan is linked to asparagine 75. A disulfide bridge connects residues cysteine 176 and cysteine 215. The helical transmembrane segment at 463–483 (PGIFLFYLLIQTVGFFGYVHF) threads the bilayer. At 484-526 (RQELNKSLQECLSTGSLPLGPAPHTPRALGILRRQPLPASMPA) the chain is on the cytoplasmic side.

Highly expressed in normal and neoplastic prostate. Also expressed in cardiac atrium, salivary gland, spleen and selective cells in the CNS.

The protein resides in the endoplasmic reticulum-Golgi intermediate compartment membrane. This is Protein ERGIC-53-like (LMAN1L) from Homo sapiens (Human).